A 68-amino-acid chain; its full sequence is Large ribosomal subunit protein bL35 (68 aa).

The disordered stretch occupies residues 29–68 (GGVSHYNTKKSSKRKRQGRKPQYVPKNLEHKVKALLPNDV). Basic residues predominate over residues 35 to 47 (NTKKSSKRKRQGR).

It belongs to the bacterial ribosomal protein bL35 family.

The chain is Large ribosomal subunit protein bL35 from Sulfurihydrogenibium sp. (strain YO3AOP1).